Here is a 247-residue protein sequence, read N- to C-terminus: Trypsin-4 (247 aa).

Residues 1–15 (MKISIFFAFLGAAVA) form the signal peptide. Positions 16-23 (LPVNDDDK) are cleaved as a propeptide — activation peptide. Positions 24-245 (IVGGYTCPKH…YLSWIQETMA (222 aa)) constitute a Peptidase S1 domain. 6 cysteine pairs are disulfide-bonded: C30/C161, C49/C65, C133/C234, C140/C207, C172/C186, and C197/C221. The Charge relay system role is filled by H64. Positions 76, 78, 81, and 86 each coordinate Ca(2+). D108 serves as the catalytic Charge relay system. The active-site Charge relay system is S201.

The protein belongs to the peptidase S1 family. Ca(2+) is required as a cofactor. Post-translationally, proteolytically cleaved and activated by an autocatalytic mechanism. Cleavage by CTRC inhibits autoactivation.

It localises to the secreted. The protein localises to the extracellular space. The enzyme catalyses Preferential cleavage: Arg-|-Xaa, Lys-|-Xaa.. With respect to regulation, activated by autocatalytic cleavage. Cleavage by CTRC inhibits autoactivation. In terms of biological role, serine protease capable of autoactivation. The chain is Trypsin-4 from Rattus norvegicus (Rat).